The following is a 141-amino-acid chain: Methylglyoxal synthase (141 aa).

The 141-residue stretch at 1-141 folds into the MGS-like domain; the sequence is MNIALIAHDK…PKLQKNKSDK (141 aa). Substrate contacts are provided by residues H8, K12, and 34–37; that span reads TGTT. D60 (proton donor/acceptor) is an active-site residue. H87 contributes to the substrate binding site.

The protein belongs to the methylglyoxal synthase family.

The enzyme catalyses dihydroxyacetone phosphate = methylglyoxal + phosphate. In terms of biological role, catalyzes the formation of methylglyoxal from dihydroxyacetone phosphate. The chain is Methylglyoxal synthase from Caldicellulosiruptor bescii (strain ATCC BAA-1888 / DSM 6725 / KCTC 15123 / Z-1320) (Anaerocellum thermophilum).